We begin with the raw amino-acid sequence, 164 residues long: Transcription elongation factor GreA (164 aa).

Residues E11–V76 are a coiled coil.

It belongs to the GreA/GreB family.

In terms of biological role, necessary for efficient RNA polymerase transcription elongation past template-encoded arresting sites. The arresting sites in DNA have the property of trapping a certain fraction of elongating RNA polymerases that pass through, resulting in locked ternary complexes. Cleavage of the nascent transcript by cleavage factors such as GreA or GreB allows the resumption of elongation from the new 3'terminus. GreA releases sequences of 2 to 3 nucleotides. In Mycolicibacterium vanbaalenii (strain DSM 7251 / JCM 13017 / BCRC 16820 / KCTC 9966 / NRRL B-24157 / PYR-1) (Mycobacterium vanbaalenii), this protein is Transcription elongation factor GreA.